We begin with the raw amino-acid sequence, 181 residues long: Large ribosomal subunit protein uL10 (181 aa).

It belongs to the universal ribosomal protein uL10 family. Part of the ribosomal stalk of the 50S ribosomal subunit. The N-terminus interacts with L11 and the large rRNA to form the base of the stalk. The C-terminus forms an elongated spine to which L12 dimers bind in a sequential fashion forming a multimeric L10(L12)X complex.

Forms part of the ribosomal stalk, playing a central role in the interaction of the ribosome with GTP-bound translation factors. The polypeptide is Large ribosomal subunit protein uL10 (Bradyrhizobium diazoefficiens (strain JCM 10833 / BCRC 13528 / IAM 13628 / NBRC 14792 / USDA 110)).